Consider the following 219-residue polypeptide: GPI-anchored hemophore PGA7 (219 aa).

The N-terminal stretch at 1 to 13 is a signal peptide; that stretch reads MHFIFYLILLVSA. Residues 17–126 enclose the CFEM domain; the sequence is GNFGTYPKVP…SMLSTAAGDA (110 aa). 4 cysteine pairs are disulfide-bonded: Cys-45–Cys-85, Cys-49–Cys-80, Cys-59–Cys-66, and Cys-68–Cys-101. Heme is bound at residue Asp-63. The disordered stretch occupies residues 151 to 194; the sequence is VVSETGSASETGSSESAQSTTTGSSSTGSSSTDSSSSSSSSPSS. Residues 153 to 194 show a composition bias toward low complexity; it reads SETGSASETGSSESAQSTTTGSSSTGSSSTDSSSSSSSSPSS. The GPI-anchor amidated serine moiety is linked to residue Ser-194. Positions 195 to 219 are cleaved as a propeptide — removed in mature form; it reads SANFAVLQTGGIGSVILGFMMYLLV.

This sequence belongs to the RBT5 family. As to quaternary structure, interacts with RBT5. In terms of processing, the GPI-anchor is attached to the protein in the endoplasmic reticulum and serves to target the protein to the cell surface. There, the glucosamine-inositol phospholipid moiety is cleaved off and the GPI-modified mannoprotein is covalently attached via its lipidless GPI glycan remnant to the 1,6-beta-glucan of the outer cell wall layer.

The protein localises to the secreted. It is found in the cell wall. The protein resides in the cell membrane. Functionally, GPI-linked hyphal surface heme-binding protein involved in heme-iron utilization. Heme transfer occurs between PGA7, RBT5 and CSA2 supporting a model in which the 3 CFEM proteins cooperate in a heme-acquisition system and form a cross-cell wall heme-transfer cascade. The ability to acquire iron from host tissues is a major virulence factor of pathogenic microorganisms. Required for biofilm formation. The sequence is that of GPI-anchored hemophore PGA7 from Candida albicans (strain SC5314 / ATCC MYA-2876) (Yeast).